A 352-amino-acid chain; its full sequence is Heat-inducible transcription repressor HrcA (352 aa).

This sequence belongs to the HrcA family.

Its function is as follows. Negative regulator of class I heat shock genes (grpE-dnaK-dnaJ and groELS operons). Prevents heat-shock induction of these operons. The protein is Heat-inducible transcription repressor HrcA of Prochlorococcus marinus (strain MIT 9313).